We begin with the raw amino-acid sequence, 379 residues long: Class V chitinase CHIT5b (379 aa).

Residues 1–26 (MANILNLKHLLTLALILLALATKSST) form the signal peptide. The 346-residue stretch at 34–379 (RVKGIYWLEN…TQASKAWKLV (346 aa)) folds into the GH18 domain. N68, N109, and N128 each carry an N-linked (GlcNAc...) asparagine glycan. The Proton donor role is filled by E147. N-linked (GlcNAc...) asparagine glycosylation is found at N192, N227, and N241.

The protein belongs to the glycosyl hydrolase 18 family. Chitinase class V subfamily.

It catalyses the reaction Random endo-hydrolysis of N-acetyl-beta-D-glucosaminide (1-&gt;4)-beta-linkages in chitin and chitodextrins.. The protein operates within glycan degradation; chitin degradation. In terms of biological role, possesses chitinase activity in vitro toward glycol chitin, carboxymethyl-chitin, colloidal chitin, and the chitin oligosaccharides (N-acetylglucosamine) (GlcNAc)6 and (GlcNAc)5. Hydrolyzes (GlcNAc)6 into (GlcNAc)4 and (GlcNAc)2, or two (GlcNAc)3 molecules. Has the capacity to reduce hyphal growth of the fungus Trichoderma viride in an agar-plate bioassay. This is Class V chitinase CHIT5b from Medicago truncatula (Barrel medic).